Reading from the N-terminus, the 333-residue chain is tRNA N6-adenosine threonylcarbamoyltransferase (333 aa).

Histidine 111 and histidine 115 together coordinate Fe cation. Substrate-binding positions include leucine 134–glycine 138, aspartate 167, glycine 180, and asparagine 272. Aspartate 300 is a binding site for Fe cation.

The protein belongs to the KAE1 / TsaD family. Fe(2+) is required as a cofactor.

It is found in the cytoplasm. It carries out the reaction L-threonylcarbamoyladenylate + adenosine(37) in tRNA = N(6)-L-threonylcarbamoyladenosine(37) in tRNA + AMP + H(+). In terms of biological role, required for the formation of a threonylcarbamoyl group on adenosine at position 37 (t(6)A37) in tRNAs that read codons beginning with adenine. Is involved in the transfer of the threonylcarbamoyl moiety of threonylcarbamoyl-AMP (TC-AMP) to the N6 group of A37, together with TsaE and TsaB. TsaD likely plays a direct catalytic role in this reaction. The chain is tRNA N6-adenosine threonylcarbamoyltransferase from Legionella pneumophila (strain Lens).